A 733-amino-acid chain; its full sequence is Oligopeptide transporter 8 (733 aa).

Helical transmembrane passes span methionine 42 to tyrosine 62, proline 66 to alanine 86, valine 115 to serine 135, phenylalanine 147 to leucine 167, phenylalanine 209 to threonine 229, serine 244 to leucine 264, phenylalanine 281 to leucine 301, phenylalanine 357 to isoleucine 377, leucine 413 to tyrosine 433, tryptophan 442 to isoleucine 462, valine 531 to isoleucine 551, tyrosine 596 to alanine 616, alanine 644 to phenylalanine 664, and valine 677 to leucine 697.

The protein belongs to the oligopeptide OPT transporter (TC 2.A.67.1) family.

Its subcellular location is the membrane. Functionally, may be involved in the translocation of tetra- and pentapeptides across the cellular membrane in an energy-dependent manner. The sequence is that of Oligopeptide transporter 8 (OPT8) from Arabidopsis thaliana (Mouse-ear cress).